Here is a 209-residue protein sequence, read N- to C-terminus: V-type ATP synthase subunit D (209 aa).

This sequence belongs to the V-ATPase D subunit family.

Functionally, produces ATP from ADP in the presence of a proton gradient across the membrane. The chain is V-type ATP synthase subunit D (atpD) from Chlamydia pneumoniae (Chlamydophila pneumoniae).